The following is a 713-amino-acid chain: Bifunctional protein gal10 (713 aa).

Residues 1 to 350 are galactowaldenase; the sequence is MAVQDEYILV…TIENPFGFQI (350 aa). 7 to 38 contacts NAD(+); the sequence is YILVTGGAGYIGSHTVIELINHGYKVIIVDNL. A mutarotase region spans residues 351–713; sequence DNYKWKLFNT…SASYNSGEYY (363 aa). The active-site For mutarotase activity is His-532.

The protein in the N-terminal section; belongs to the NAD(P)-dependent epimerase/dehydratase family. In the C-terminal section; belongs to the aldose epimerase family. NAD(+) is required as a cofactor.

It catalyses the reaction UDP-alpha-D-glucose = UDP-alpha-D-galactose. It carries out the reaction alpha-D-glucose = beta-D-glucose. Its pathway is carbohydrate metabolism; galactose metabolism. It participates in carbohydrate metabolism; hexose metabolism. Mutarotase converts alpha-aldose to the beta-anomer. It is active on D-glucose, L-arabinose, D-xylose, D-galactose, maltose and lactose. The protein is Bifunctional protein gal10 (gal10) of Schizosaccharomyces pombe (strain 972 / ATCC 24843) (Fission yeast).